We begin with the raw amino-acid sequence, 186 residues long: Ribulose bisphosphate carboxylase small subunit, chloroplastic 6 (186 aa).

The N-terminal 60 residues, 1 to 60, are a transit peptide targeting the chloroplast; sequence MASSMLSNAAVATTAASRSAGAQASMVAPFTGLKSVSAFPVTRKSSNDLSTVPSNGGKVQ.

This sequence belongs to the RuBisCO small chain family. Heterohexadecamer of 8 large and 8 small subunits.

Its subcellular location is the plastid. The protein localises to the chloroplast. Its function is as follows. RuBisCO catalyzes two reactions: the carboxylation of D-ribulose 1,5-bisphosphate, the primary event in carbon dioxide fixation, as well as the oxidative fragmentation of the pentose substrate. Both reactions occur simultaneously and in competition at the same active site. Although the small subunit is not catalytic it is essential for maximal activity. This is Ribulose bisphosphate carboxylase small subunit, chloroplastic 6 from Mesembryanthemum crystallinum (Common ice plant).